The following is a 591-amino-acid chain: Aspartate--tRNA ligase (591 aa).

Glutamate 176 is a binding site for L-aspartate. The tract at residues 200 to 203 (QILK) is aspartate. An L-aspartate-binding site is contributed by arginine 222. ATP-binding positions include 222 to 224 (RDE) and glutamine 231. Position 450 (histidine 450) interacts with L-aspartate. Position 484 (glutamate 484) interacts with ATP. Arginine 491 contributes to the L-aspartate binding site. An ATP-binding site is contributed by 536 to 539 (GLDR).

Belongs to the class-II aminoacyl-tRNA synthetase family. Type 1 subfamily. Homodimer.

The protein localises to the cytoplasm. It carries out the reaction tRNA(Asp) + L-aspartate + ATP = L-aspartyl-tRNA(Asp) + AMP + diphosphate. In terms of biological role, catalyzes the attachment of L-aspartate to tRNA(Asp) in a two-step reaction: L-aspartate is first activated by ATP to form Asp-AMP and then transferred to the acceptor end of tRNA(Asp). The protein is Aspartate--tRNA ligase of Listeria monocytogenes serotype 4a (strain HCC23).